Consider the following 424-residue polypeptide: Enolase (424 aa).

Q165 contributes to the (2R)-2-phosphoglycerate binding site. E207 functions as the Proton donor in the catalytic mechanism. 3 residues coordinate Mg(2+): D244, E283, and D310. 4 residues coordinate (2R)-2-phosphoglycerate: K335, R364, S365, and K386. Catalysis depends on K335, which acts as the Proton acceptor.

The protein belongs to the enolase family. Mg(2+) is required as a cofactor.

It localises to the cytoplasm. It is found in the secreted. The protein resides in the cell surface. It carries out the reaction (2R)-2-phosphoglycerate = phosphoenolpyruvate + H2O. Its pathway is carbohydrate degradation; glycolysis; pyruvate from D-glyceraldehyde 3-phosphate: step 4/5. In terms of biological role, catalyzes the reversible conversion of 2-phosphoglycerate (2-PG) into phosphoenolpyruvate (PEP). It is essential for the degradation of carbohydrates via glycolysis. This is Enolase from Chlamydia trachomatis serovar L2 (strain ATCC VR-902B / DSM 19102 / 434/Bu).